The following is a 245-amino-acid chain: MTLTLLPAVDVADGLAVRLVQGEAGTETSYGDPREAALAWQRDGAEWIHLVDLDAAFGRGSNRDLIAEVVRSVDVAVELSGGIRDDDSLDAALATGAARVNIGTAALEDPEWVRKAIDRVGDRIAVGLDVRGTTLAARGWTREGGELYEVLARLDADGCARYVLTDVRRDGTLTGPNVELLRAVTAATTRPVVASGGVSSLEDLRVIATVPGVEGAIVGKALYAGAFTLPEALAVAAEVPAAGAP.

The active-site Proton acceptor is the D10. D129 serves as the catalytic Proton donor.

Belongs to the HisA/HisF family.

The protein resides in the cytoplasm. The catalysed reaction is 1-(5-phospho-beta-D-ribosyl)-5-[(5-phospho-beta-D-ribosylamino)methylideneamino]imidazole-4-carboxamide = 5-[(5-phospho-1-deoxy-D-ribulos-1-ylimino)methylamino]-1-(5-phospho-beta-D-ribosyl)imidazole-4-carboxamide. It functions in the pathway amino-acid biosynthesis; L-histidine biosynthesis; L-histidine from 5-phospho-alpha-D-ribose 1-diphosphate: step 4/9. This is 1-(5-phosphoribosyl)-5-[(5-phosphoribosylamino)methylideneamino] imidazole-4-carboxamide isomerase from Parafrankia sp. (strain EAN1pec).